Here is a 544-residue protein sequence, read N- to C-terminus: Chaperonin GroEL 2 (544 aa).

Residues 29 to 32 (TLGP), 86 to 90 (DGTTT), Gly-413, 479 to 481 (NAA), and Asp-495 each bind ATP.

The protein belongs to the chaperonin (HSP60) family. In terms of assembly, forms a cylinder of 14 subunits composed of two heptameric rings stacked back-to-back. Interacts with the co-chaperonin GroES.

The protein resides in the cytoplasm. The catalysed reaction is ATP + H2O + a folded polypeptide = ADP + phosphate + an unfolded polypeptide.. Together with its co-chaperonin GroES, plays an essential role in assisting protein folding. The GroEL-GroES system forms a nano-cage that allows encapsulation of the non-native substrate proteins and provides a physical environment optimized to promote and accelerate protein folding. This chain is Chaperonin GroEL 2, found in Synechococcus sp. (strain WH7803).